A 240-amino-acid polypeptide reads, in one-letter code: tRNA (guanine-N(1)-)-methyltransferase (240 aa).

Residues G111 and 130–135 (IGDYVI) each bind S-adenosyl-L-methionine.

It belongs to the RNA methyltransferase TrmD family. In terms of assembly, homodimer.

It is found in the cytoplasm. The enzyme catalyses guanosine(37) in tRNA + S-adenosyl-L-methionine = N(1)-methylguanosine(37) in tRNA + S-adenosyl-L-homocysteine + H(+). Specifically methylates guanosine-37 in various tRNAs. This is tRNA (guanine-N(1)-)-methyltransferase from Mycoplasma mycoides subsp. mycoides SC (strain CCUG 32753 / NCTC 10114 / PG1).